A 266-amino-acid polypeptide reads, in one-letter code: Early E1A protein (266 aa).

The interaction with RB1 in competition with E2F1 stretch occupies residues 39 to 47; sequence MSLHEMYDL. The PXLXP motif, interaction with host ZMYND11 signature appears at 94-98; it reads PELQP. Residues 103–107 carry the LXCXE motif, interaction with host RB1 motif; sequence LFCYE. A zinc finger lies at 160–180; sequence CSSCDYHRKTSGCPEILCSLC. The interval 193–244 is disordered; the sequence is VSDSEPDEPDSTTADSNHGSPPTLRCTPPRDLPRPVPVKASPGKRPAVNSLH. A compositionally biased stretch (polar residues) spans 203–212; that stretch reads STTADSNHGS. Positions 255-259 match the PXDLS motif, CTBP-binding motif; it reads PLDLS. The short motif at 261 to 265 is the Nuclear localization signal element; the sequence is KRSRS.

It belongs to the adenoviridae E1A protein family. In terms of assembly, interacts with host UBE2I; this interaction interferes with polySUMOylation. Interacts with host RB1; this interaction induces the aberrant dissociation of RB1-E2F1 complex thereby disrupting the activity of RB1 and activating E2F1-regulated genes. Interacts with host ATF7; the interaction enhances ATF7-mediated viral transactivation activity which requires the zinc binding domains of both proteins. Isoform early E1A 32 kDa protein and isoform early E1A 26 kDa protein interact (via N-terminus) with CUL1 and E3 ubiquitin ligase RBX1; these interactions inhibit RBX1-CUL1-dependent elongation reaction of ubiquitin chains and attenuate ubiquitination of SCF(FBXW7) target proteins. Interacts (via PXLXP motif) with host ZMYND11/BS69 (via MYND-type zinc finger); this interaction inhibits E1A mediated transactivation. Interacts with host EP300; this interaction stimulates the acetylation of RB1 by recruiting EP300 and RB1 into a multimeric-protein complex. Interacts with host CTBP1 and CTBP2; this interaction seems to potentiate viral replication. Interacts with host DCAF7. Interacts with host DYRK1A. Interacts with host KPNA4; this interaction allows E1A import into the host nucleus. Interacts with host EP400; this interaction stabilizes MYC. Interacts with host TBP protein; this interaction probably disrupts the TBP-TATA complex.

Its subcellular location is the host nucleus. Functionally, plays a role in viral genome replication by driving entry of quiescent cells into the cell cycle. Stimulation of progression from G1 to S phase allows the virus to efficiently use the cellular DNA replicating machinery to achieve viral genome replication. E1A protein has both transforming and trans-activating activities. Induces the disassembly of the E2F1 transcription factor from RB1 by direct competition for the same binding site on RB1, with subsequent transcriptional activation of E2F1-regulated S-phase genes and of the E2 region of the adenoviral genome. Release of E2F1 leads to the ARF-mediated inhibition of MDM2 and causes TP53/p53 to accumulate because it is not targeted for degradation by MDM2-mediated ubiquitination anymore. This increase in TP53, in turn, would arrest the cell proliferation and direct its death but this effect is counteracted by the viral protein E1B-55K. Inactivation of the ability of RB1 to arrest the cell cycle is critical for cellular transformation, uncontrolled cellular growth and proliferation induced by viral infection. Interaction with RBX1 and CUL1 inhibits ubiquitination of the proteins targeted by SCF(FBXW7) ubiquitin ligase complex, and may be linked to unregulated host cell proliferation. The tumorigenesis-restraining activity of E1A may be related to the disruption of the host CtBP-CtIP complex through the CtBP binding motif. The chain is Early E1A protein from Simian adenovirus serotype 7 (SAdV-7).